The primary structure comprises 359 residues: Methyltransferase fsa4 (359 aa).

S-adenosyl-L-methionine is bound by residues 198 to 199, D224, 248 to 249, R264, and R265; these read GG and SF.

This sequence belongs to the class I-like SAM-binding methyltransferase superfamily. Cation-independent O-methyltransferase family.

It functions in the pathway mycotoxin biosynthesis. Methyltransferase; part of the gene cluster that mediates the biosynthesis of HIV-1 integrase inhibitor equisetin and of fusarisetin A, both trans-fused decalin-containing tetramic acids showing also antimicrobial activity. The PKS module of fsa1 together with the enoylreductase fsa3 catalyze the formation of the polyketide unit which is then conjugated to L-serine by the condensation domain of the fsa1 NRPS module. Activity of the Dieckmann cyclase domain (RED) results in release of the Dieckmann product intermediate. Diels-Alderase fsa2 is involved in endo-selective Diels-Alder cycloaddition to form the decalin ring, leading to the production of N-desmethylequisetin also called trichosetin. Subsequent N-methylation is carried out by fsa4 to give equisetin. The enzymatic gene responsible for the conversion of equisetin to fusarisetin A has not been identified yet and is probably located outside of the fsa cluster. This is Methyltransferase fsa4 from Fusarium sp. (strain FN080326).